An 82-amino-acid polypeptide reads, in one-letter code: Small ribosomal subunit protein uS17 (82 aa).

It belongs to the universal ribosomal protein uS17 family. In terms of assembly, part of the 30S ribosomal subunit.

In terms of biological role, one of the primary rRNA binding proteins, it binds specifically to the 5'-end of 16S ribosomal RNA. The polypeptide is Small ribosomal subunit protein uS17 (Shewanella halifaxensis (strain HAW-EB4)).